Reading from the N-terminus, the 353-residue chain is S-adenosylmethionine:tRNA ribosyltransferase-isomerase (353 aa).

It belongs to the QueA family. In terms of assembly, monomer.

It localises to the cytoplasm. The enzyme catalyses 7-aminomethyl-7-carbaguanosine(34) in tRNA + S-adenosyl-L-methionine = epoxyqueuosine(34) in tRNA + adenine + L-methionine + 2 H(+). The protein operates within tRNA modification; tRNA-queuosine biosynthesis. Functionally, transfers and isomerizes the ribose moiety from AdoMet to the 7-aminomethyl group of 7-deazaguanine (preQ1-tRNA) to give epoxyqueuosine (oQ-tRNA). The polypeptide is S-adenosylmethionine:tRNA ribosyltransferase-isomerase (Blochmanniella floridana).